The chain runs to 104 residues: Large ribosomal subunit protein uL24 (104 aa).

This sequence belongs to the universal ribosomal protein uL24 family. Part of the 50S ribosomal subunit.

In terms of biological role, one of two assembly initiator proteins, it binds directly to the 5'-end of the 23S rRNA, where it nucleates assembly of the 50S subunit. One of the proteins that surrounds the polypeptide exit tunnel on the outside of the subunit. The protein is Large ribosomal subunit protein uL24 of Pectobacterium carotovorum subsp. carotovorum (strain PC1).